A 111-amino-acid polypeptide reads, in one-letter code: Photosystem II reaction center Psb28 protein (111 aa).

This sequence belongs to the Psb28 family. In terms of assembly, part of the photosystem II complex.

Its subcellular location is the cellular thylakoid membrane. In Gloeothece citriformis (strain PCC 7424) (Cyanothece sp. (strain PCC 7424)), this protein is Photosystem II reaction center Psb28 protein.